We begin with the raw amino-acid sequence, 214 residues long: Probable GTP-binding protein EngB (214 aa).

Residues 24–199 form the EngB-type G domain; it reads GGYEVAFAGR…RGIVGGWLGL (176 aa). GTP-binding positions include 32-39, 59-63, 77-80, 144-147, and 178-180; these read GRSNAGKS, GRTQQ, DLPG, TKAD, and YSG. 2 residues coordinate Mg(2+): Ser39 and Thr61.

This sequence belongs to the TRAFAC class TrmE-Era-EngA-EngB-Septin-like GTPase superfamily. EngB GTPase family. Requires Mg(2+) as cofactor.

In terms of biological role, necessary for normal cell division and for the maintenance of normal septation. In Xanthomonas axonopodis pv. citri (strain 306), this protein is Probable GTP-binding protein EngB.